Reading from the N-terminus, the 203-residue chain is Putative B3 domain-containing protein At1g50220 (203 aa).

The TF-B3 DNA-binding region spans 99–195 (DIVGNVALPK…KFIVLNFQHK (97 aa)).

The protein localises to the nucleus. The chain is Putative B3 domain-containing protein At1g50220 from Arabidopsis thaliana (Mouse-ear cress).